The sequence spans 236 residues: Pyridoxine 5'-phosphate synthase (236 aa).

Asparagine 6 serves as a coordination point for 3-amino-2-oxopropyl phosphate. 1-deoxy-D-xylulose 5-phosphate is bound at residue 8–9 (DH). Arginine 17 serves as a coordination point for 3-amino-2-oxopropyl phosphate. Histidine 42 serves as the catalytic Proton acceptor. Arginine 44 and histidine 49 together coordinate 1-deoxy-D-xylulose 5-phosphate. The active-site Proton acceptor is the glutamate 69. Residue threonine 99 coordinates 1-deoxy-D-xylulose 5-phosphate. Histidine 190 (proton donor) is an active-site residue. 3-amino-2-oxopropyl phosphate contacts are provided by residues glycine 191 and 212–213 (GH).

Belongs to the PNP synthase family. Homooctamer; tetramer of dimers.

It localises to the cytoplasm. The catalysed reaction is 3-amino-2-oxopropyl phosphate + 1-deoxy-D-xylulose 5-phosphate = pyridoxine 5'-phosphate + phosphate + 2 H2O + H(+). It participates in cofactor biosynthesis; pyridoxine 5'-phosphate biosynthesis; pyridoxine 5'-phosphate from D-erythrose 4-phosphate: step 5/5. Catalyzes the complicated ring closure reaction between the two acyclic compounds 1-deoxy-D-xylulose-5-phosphate (DXP) and 3-amino-2-oxopropyl phosphate (1-amino-acetone-3-phosphate or AAP) to form pyridoxine 5'-phosphate (PNP) and inorganic phosphate. This Chloroherpeton thalassium (strain ATCC 35110 / GB-78) protein is Pyridoxine 5'-phosphate synthase.